The primary structure comprises 83 residues: U15-theraphotoxin-Cg1a (83 aa).

Residues 1 to 21 (MKAAILLAFAGLALLSVICHA) form the signal peptide. Residues 22-49 (SENVEQDSFEEVFSAIFAMEDDLKPKER) constitute a propeptide that is removed on maturation. 3 disulfides stabilise this stretch: cysteine 51-cysteine 66, cysteine 58-cysteine 71, and cysteine 65-cysteine 77. Alanine 81 carries the alanine amide modification.

It belongs to the neurotoxin 10 (Hwtx-1) family. 66 (Jztx-24) subfamily. Expressed by the venom gland.

The protein resides in the secreted. In terms of biological role, probable ion channel inhibitor. This Chilobrachys guangxiensis (Chinese earth tiger tarantula) protein is U15-theraphotoxin-Cg1a.